The chain runs to 311 residues: Cytosolic Fe-S cluster assembly factor Nubp1 homolog (311 aa).

Positions 1–21 are disordered; sequence MQAPPPEHCPGVESEEAGKGS. Residues Cys-9, Cys-23, Cys-26, and Cys-32 each contribute to the [4Fe-4S] cluster site. 63 to 70 serves as a coordination point for ATP; that stretch reads GKGGVGKS. Residues Cys-240 and Cys-243 each coordinate [4Fe-4S] cluster.

The protein belongs to the Mrp/NBP35 ATP-binding proteins family. NUBP1/NBP35 subfamily. Heterotetramer of 2 Nubp1 and 2 Nubp2 chains. [4Fe-4S] cluster serves as cofactor.

It localises to the cytoplasm. Its function is as follows. Component of the cytosolic iron-sulfur (Fe/S) protein assembly (CIA) machinery. Required for maturation of extramitochondrial Fe-S proteins. The Nubp1-Nubp2 heterotetramer forms a Fe-S scaffold complex, mediating the de novo assembly of an Fe-S cluster and its transfer to target apoproteins. The polypeptide is Cytosolic Fe-S cluster assembly factor Nubp1 homolog (Drosophila melanogaster (Fruit fly)).